The primary structure comprises 65 residues: Probable tautomerase RSp1151 (65 aa).

Catalysis depends on proline 2, which acts as the Proton acceptor; via imino nitrogen.

This sequence belongs to the 4-oxalocrotonate tautomerase family.

This Ralstonia nicotianae (strain ATCC BAA-1114 / GMI1000) (Ralstonia solanacearum) protein is Probable tautomerase RSp1151.